A 551-amino-acid chain; its full sequence is MASCNPTRKKSSASSLSMWRTILMALTTLPLSVLSQELVPANSTTSSTAPSITSLSAVESFTSSTDATSSASLSTPSIASVSFTSFPQSSSLLTLSSTLSSELSSSSMQVSSSSTSSSSSEVTSSSSSSSISPSSSSSTIISSSSSLPTFTVASTSSTVASSTLSTSSSLVISTSSSTFTFSSESSSSLISSSISTSVSTSSVYVPSSSTSSPPSSSSELTSSSYSSSSSSSTLFSYSSSFSSSSSSSSSSSSSSSSSSSSSSSYFTLSTSSSSSIYSSSSYPSFSSSSSSNPTSSITSTSASSSITPASEYSNLAKTITSIIEGQTILSNYYTTITYSPTASASSGKNSHHSGLSKKNRNIIIGCVVGIGAPLILILLILIYMFCVQPKKTDFIDSDGKIVTAYRSNIFTKIWYFLLGKKIGETERFSSDSPIGSNNIQNFGDIDPEDILNNDNPYTPKHTNVEGYDDDDDDDANDENLSSNFHNRGIDDQYSPTKSASYSMSNSNSQDYNDADEVMHDENIHRVYDDSEASIDENYYTKPNNGLNITNY.

The N-terminal stretch at methionine 1 to serine 35 is a signal peptide. The Extracellular segment spans residues glutamine 36–asparagine 361. 3 disordered regions span residues methionine 108 to serine 143, proline 206 to serine 227, and serine 243 to serine 263. The helical transmembrane segment at isoleucine 362–isoleucine 382 threads the bilayer. The Cytoplasmic portion of the chain corresponds to tyrosine 383–tyrosine 551. Residues serine 429–aspartate 513 form a disordered region. Over residues serine 430–asparagine 441 the composition is skewed to polar residues. Over residues glycine 466–aspartate 477 the composition is skewed to acidic residues. Residues serine 481 and serine 482 each carry the phosphoserine modification. Positions serine 498–serine 508 are enriched in low complexity.

The protein belongs to the MID2 like cell wall stress sensor family.

It is found in the membrane. In terms of biological role, involved in cell integrity signaling during vegetative growth at elevated temperature. Acts positively on the PKC1-MAPK pathway. Cell membrane sensor of oxidative stress in the cell integrity pathway upstream of PKC1. Required to transmit the oxidative signal to SLT2 and to restore the correct actin organization following oxidative stress. Multicopy suppressor of 1,3-beta-glucan synthase (GS) mutation. Also suppresses RGD1 null mutations. This is Protein MTL1 (MTL1) from Saccharomyces cerevisiae (strain ATCC 204508 / S288c) (Baker's yeast).